The chain runs to 507 residues: ATP synthase subunit alpha, chloroplastic (507 aa).

170–177 (GDRQTGKT) lines the ATP pocket.

Belongs to the ATPase alpha/beta chains family. As to quaternary structure, F-type ATPases have 2 components, CF(1) - the catalytic core - and CF(0) - the membrane proton channel. CF(1) has five subunits: alpha(3), beta(3), gamma(1), delta(1), epsilon(1). CF(0) has four main subunits: a, b, b' and c.

It is found in the plastid. The protein resides in the chloroplast thylakoid membrane. It carries out the reaction ATP + H2O + 4 H(+)(in) = ADP + phosphate + 5 H(+)(out). Its function is as follows. Produces ATP from ADP in the presence of a proton gradient across the membrane. The alpha chain is a regulatory subunit. The chain is ATP synthase subunit alpha, chloroplastic from Nicotiana tomentosiformis (Tobacco).